Consider the following 348-residue polypeptide: Cylicin-2 (348 aa).

A 31 X 3 AA repeats of K-K-X region spans residues 25 to 347 (KKSWNQQHFA…DEKKDAKKKG (323 aa)). Disordered stretches follow at residues 35 to 59 (LLFP…DNTV) and 101 to 348 (PTRT…KKGK). Composition is skewed to basic and acidic residues over residues 103–159 (RTVE…DAKK), 166–217 (KDAE…EKDS), 238–267 (KADE…AKEI), and 276–342 (KPSS…EKKD). Tandem repeats lie at residues 157-184 (AKKD…EKGG), 185-212 (AKKD…EKGG), and 213-240 (TEKD…VKAD). The interval 157 to 240 (AKKDSKKGKK…AIELQAVKAD (84 aa)) is 3 X approximate tandem repeats.

As to expression, testis.

It is found in the cytoplasm. The protein localises to the cytoskeleton. It localises to the perinuclear theca. Its subcellular location is the calyx. In terms of biological role, plays a role in the establishment of normal sperm morphology during spermatogenesis. It is required for acrosome attachment to the nuclear envelope, and proper manchette elongation and disassembly. In Homo sapiens (Human), this protein is Cylicin-2 (CYLC2).